We begin with the raw amino-acid sequence, 102 residues long: Vacuolar ATPase assembly integral membrane protein VMA21 homolog (102 aa).

Residues 1-33 (MTTSSSSEPSTMATLFPNFRDQEVQSAVKNLLT) lie on the Cytoplasmic side of the membrane. Residues 34-54 (YSLVILIVPLASMFLLKQFFF) traverse the membrane as a helical segment. At 55 to 67 (EGLLGVSANDALT) the chain is on the lumenal side. Residues 68–88 (YSAIIAVVLVHVVLGIWLFAA) traverse the membrane as a helical segment. Over 89-102 (TKQEDRKKRENKQD) the chain is Cytoplasmic.

It belongs to the VMA21 family.

It is found in the endoplasmic reticulum membrane. Its subcellular location is the endoplasmic reticulum-Golgi intermediate compartment membrane. It localises to the cytoplasmic vesicle. The protein localises to the COPII-coated vesicle membrane. In terms of biological role, required for the assembly of the V0 complex of the vacuolar ATPase (V-ATPase) in the endoplasmic reticulum. This is Vacuolar ATPase assembly integral membrane protein VMA21 homolog from Caenorhabditis elegans.